Here is a 443-residue protein sequence, read N- to C-terminus: Phosphoglucosamine mutase (443 aa).

S101 acts as the Phosphoserine intermediate in catalysis. Positions 101, 239, 241, and 243 each coordinate Mg(2+). Residue S101 is modified to Phosphoserine.

Belongs to the phosphohexose mutase family. Requires Mg(2+) as cofactor. In terms of processing, activated by phosphorylation.

It catalyses the reaction alpha-D-glucosamine 1-phosphate = D-glucosamine 6-phosphate. Its function is as follows. Catalyzes the conversion of glucosamine-6-phosphate to glucosamine-1-phosphate. This is Phosphoglucosamine mutase from Francisella philomiragia subsp. philomiragia (strain ATCC 25017 / CCUG 19701 / FSC 153 / O#319-036).